The following is a 245-amino-acid chain: MWSVRMRASKKENNIEKHISGAEGIYDYSQIERVLKQLFKRAFEHSKGKPDKVVITVERINEEIQTVSALPVNTFFTNSPEEAFCLISEKLSSIGISDKALFSAFEVIKKYPMRGATLIDSITGERLERDKTRGIRVSRIHMDKRKRMKLIRQIKNLSTQPQRVIEAITIASKVASYPEVVAELCISDNPDYTIGYIASRDLGYLRITNIKNKGETIGGRAFFVKTPCDIEKLTNYLERKPVLVI.

It belongs to the BioW family. In terms of assembly, homodimer. Mg(2+) is required as a cofactor.

It catalyses the reaction heptanedioate + ATP + CoA = 6-carboxyhexanoyl-CoA + AMP + diphosphate. The protein operates within metabolic intermediate metabolism; pimeloyl-CoA biosynthesis; pimeloyl-CoA from pimelate: step 1/1. Its function is as follows. Catalyzes the transformation of pimelate into pimeloyl-CoA with concomitant hydrolysis of ATP to AMP. The chain is 6-carboxyhexanoate--CoA ligase from Thermodesulfovibrio yellowstonii (strain ATCC 51303 / DSM 11347 / YP87).